Here is a 183-residue protein sequence, read N- to C-terminus: Oleosin 5 (183 aa).

The tract at residues 1–39 is polar; sequence MADVRTHSHQLQVHPQRQHEGGIKVLYPQSGPSSTQVLA. 3 consecutive transmembrane segments (helical) span residues 37–57, 66–86, and 87–107; these read VLAVFVGVPIGGTLLTIAGLT, MLAFPLFLIFSPVIVPAAFVI, and GLAMTGFLASGAIGLTGLSSM. The segment at 40-113 is hydrophobic; sequence VFVGVPIGGT…LSSMSWVLNY (74 aa). The tract at residues 144-183 is disordered; that stretch reads KDAGQTIEDKAHDVREAKTFDVRDRDTTKGTHNVRDTKTT.

It belongs to the oleosin family.

The protein resides in the lipid droplet. Its subcellular location is the membrane. In terms of biological role, may have a structural role to stabilize the lipid body during desiccation of the seed by preventing coalescence of the oil. Probably interacts with both lipid and phospholipid moieties of lipid bodies. May also provide recognition signals for specific lipase anchorage in lipolysis during seedling growth. This chain is Oleosin 5, found in Arabidopsis thaliana (Mouse-ear cress).